Reading from the N-terminus, the 279-residue chain is MTSFPASHGFGPRKRGYQMDLTNVQPVENKPAWISMKSPLEKEIANEYEALKVTERKEDTQDYNEPELHNSNDPTVDLYADTYATQAATESDSELEDALFSQLDEFDDTAYREQRLEMLKKEFARVEAAKEKGHMQFLTVENEREVMDFTLSSKKVVIHFYHPDFIRCKIIDSHLEKIAKVHWETKFIRIEAANAPFLVVKLGLKVLPAVLCYVNSQLVDKIIGFADLGNKDDFETSLLEFRLLKSSAIDRLKEESSSNKSIYHDELQNNQSDDSDFFE.

A compositionally biased stretch (basic and acidic residues) spans 56–70 (RKEDTQDYNEPELHN). The disordered stretch occupies residues 56 to 75 (RKEDTQDYNEPELHNSNDPT). One can recognise a Thioredoxin domain in the interval 137-248 (FLTVENEREV…LEFRLLKSSA (112 aa)). Basic and acidic residues predominate over residues 254–267 (EESSSNKSIYHDEL). The disordered stretch occupies residues 254–279 (EESSSNKSIYHDELQNNQSDDSDFFE). Residues Ser272 and Ser275 each carry the phosphoserine modification.

The protein belongs to the phosducin family.

Its subcellular location is the cytoplasm. It localises to the nucleus. Functionally, inhibits early G-protein signaling events following pheromone stimulation. May help create heterodimerizable beta-tubulin by facilitating the efficient transfer of nascent beta-tubulin polypeptides to the folding apparatus. This is Thioredoxin domain-containing protein plp1 (plp1) from Schizosaccharomyces pombe (strain 972 / ATCC 24843) (Fission yeast).